The sequence spans 113 residues: EVKLEESGGGLVQPGGSMKLSCVASGFTFSNYWMNWVRQSPEKGLEWVAEIRLKSHNYATHYAESVKGRFTISRDDSKSSVYLQMNNLRAEDTAIYYCSTGFAYWGQGTLVTV.

Residues 1 to 113 (EVKLEESGGG…YWGQGTLVTV (113 aa)) enclose the Ig-like domain. Cys22 and Cys98 form a disulfide bridge.

The protein is Ig heavy chain V-III region ABE-47N of Mus musculus (Mouse).